A 589-amino-acid chain; its full sequence is Protein OS-9 homolog (589 aa).

Positions 1 to 21 (MFSILNKLGIIWLALANISNC) are cleaved as a signal peptide. N17, N61, and N90 each carry an N-linked (GlcNAc...) asparagine glycan. An MRH domain is found at 130–288 (KDCVFAYGSN…VIGVPKLCSL (159 aa)). A disulfide bridge links C132 with C148. A mannooligosaccharide derivative-binding residues include W143, Q155, D241, R247, E270, and Y276. 2 cysteine pairs are disulfide-bonded: C240–C274 and C255–C286. Residue N426 is glycosylated (N-linked (GlcNAc...) asparagine). Residues 497–520 (GKGSALDSTNNDKNNKATAENDKQ) are disordered. Residues 509-519 (KNNKATAENDK) are compositionally biased toward basic and acidic residues. The Prevents secretion from ER signature appears at 586–589 (HDEL).

Belongs to the OS-9 family. In terms of assembly, interacts with missfolded ER lumenal proteins.

The protein localises to the endoplasmic reticulum membrane. In terms of biological role, lectin involved in the quality control of the secretory pathway. As a member of the endoplasmic reticulum-associated degradation lumenal (ERAD-L) surveillance system, targets misfolded endoplasmic reticulum lumenal glycoproteins for degradation. This Debaryomyces hansenii (strain ATCC 36239 / CBS 767 / BCRC 21394 / JCM 1990 / NBRC 0083 / IGC 2968) (Yeast) protein is Protein OS-9 homolog (YOS9).